The chain runs to 206 residues: Protein-methionine-sulfoxide reductase heme-binding subunit MsrQ (206 aa).

The next 6 helical transmembrane spans lie at isoleucine 7–glycine 27, phenylalanine 43–tyrosine 63, leucine 77–leucine 97, glycine 112–tryptophan 132, tryptophan 142–valine 162, and serine 172–isoleucine 192.

The protein belongs to the MsrQ family. In terms of assembly, heterodimer of a catalytic subunit (MsrP) and a heme-binding subunit (MsrQ). FMN is required as a cofactor. Heme b serves as cofactor.

It is found in the cell inner membrane. Functionally, part of the MsrPQ system that repairs oxidized periplasmic proteins containing methionine sulfoxide residues (Met-O), using respiratory chain electrons. Thus protects these proteins from oxidative-stress damage caused by reactive species of oxygen and chlorine generated by the host defense mechanisms. MsrPQ is essential for the maintenance of envelope integrity under bleach stress, rescuing a wide series of structurally unrelated periplasmic proteins from methionine oxidation. MsrQ provides electrons for reduction to the reductase catalytic subunit MsrP, using the quinone pool of the respiratory chain. This chain is Protein-methionine-sulfoxide reductase heme-binding subunit MsrQ, found in Pasteurella multocida (strain Pm70).